Here is a 129-residue protein sequence, read N- to C-terminus: 3-aminoacrylate deaminase RutC (129 aa).

This sequence belongs to the RutC family.

It catalyses the reaction (Z)-3-aminoacrylate + H2O + H(+) = 3-oxopropanoate + NH4(+). Its function is as follows. Involved in pyrimidine catabolism. Catalyzes the deamination of 3-aminoacrylate to malonic semialdehyde, a reaction that can also occur spontaneously. RutC may facilitate the reaction and modulate the metabolic fitness, rather than catalyzing essential functions. This chain is 3-aminoacrylate deaminase RutC, found in Rhizobium rhizogenes (strain K84 / ATCC BAA-868) (Agrobacterium radiobacter).